The sequence spans 348 residues: CCAAT/enhancer-binding protein beta (348 aa).

The segment at 1–24 (MQRLVVWDPVCLPLPPPPPAFKSM) is required for Lys-174 sumoylation. The residue at position 3 (R3) is an Asymmetric dimethylarginine; by CARM1. The tract at residues 24-135 (MEVANFYYEA…YGGKNCKKAA (112 aa)) is required for MYC transcriptional repression. An N6-acetyllysine; alternate modification is found at K43. K43 is subject to N6-methylated lysine; alternate. Disordered stretches follow at residues 44–65 (AAPA…ELGS) and 79–112 (LEPL…ASSG). Residues 47 to 59 (AAPPADRPGPRPP) show a composition bias toward pro residues. Residues 116–124 (DFLSDLFSD) carry the 9aaTAD motif. 2 positions are modified to N6-acetyllysine; by KAT2A and KAT2B: K129 and K132. At K133 the chain carries N6-acetyllysine; by KAT2A and KAT2B; alternate. Residue K133 forms a Glycyl lysine isopeptide (Lys-Gly) (interchain with G-Cter in SUMO2); alternate linkage. Residues 158-178 (APLHPPPPPPPPPAELKAEPG) form a disordered region. Pro residues predominate over residues 160 to 171 (LHPPPPPPPPPA). A Glycyl lysine isopeptide (Lys-Gly) (interchain with G-Cter in SUMO2); alternate cross-link involves residue K174. K174 participates in a covalent cross-link: Glycyl lysine isopeptide (Lys-Gly) (interchain with G-Cter in SUMO); alternate. Glycyl lysine isopeptide (Lys-Gly) (interchain with G-Cter in SUMO2) cross-links involve residues K185 and K187. Positions 219–259 (SGSSGSLSTSSSSSPPGTPSPADAKATPAAAACYAGAAPAP) are enriched in low complexity. The disordered stretch occupies residues 219-277 (SGSSGSLSTSSSSSPPGTPSPADAKATPAAAACYAGAAPAPSQVKSKAKKTVDKHSDEY). A Phosphothreonine; by GSK3-beta modification is found at T227. Residues S228 and S229 are each glycosylated (O-linked (GlcNAc) serine). S232 carries the phosphoserine; by GSK3-beta modification. T236 is subject to Phosphothreonine; by RPS6KA1, CDK2 and MAPK. Glycyl lysine isopeptide (Lys-Gly) (interchain with G-Cter in SUMO2) cross-links involve residues K263 and K265. The span at 268–277 (KTVDKHSDEY) shows a compositional bias: basic and acidic residues. A Phosphothreonine; by RPS6KA1 and PKC/PRKCA modification is found at T269. The bZIP domain maps to 274–337 (SDEYKIRRER…STLRNLFKTL (64 aa)). Residues 278–298 (KIRRERNNIAVRKSRDKAKMR) form a basic motif region. S291 carries the post-translational modification Phosphoserine; by PKC/PRKCA. The segment at 300–307 (LETQHKVL) is leucine-zipper. S328 is subject to Phosphoserine; by CaMK2. K335 is covalently cross-linked (Glycyl lysine isopeptide (Lys-Gly) (interchain with G-Cter in SUMO2)).

This sequence belongs to the bZIP family. C/EBP subfamily. In terms of assembly, binds DNA as a homodimer and as a heterodimer. Interacts with ATF4. Binds DNA as a heterodimer with ATF4. Interacts with MYB; within the complex, MYB and CEBPB bind to different promoter regions. Can form stable heterodimers with CEBPA, CEBPD and CEBPG. Interacts with SIX1. Interacts with TRIM28 and PTGES2. Interacts with PRDM16. Interacts with CCDC85B. Forms a complex with THOC5. Interacts with ZNF638; this interaction increases transcriptional activation. Interacts with CIDEA and CIDEC; these interactions increase transcriptional activation of a subset of CEBPB downstream target genes. Interacts with DDIT3/CHOP. Interacts with EP300; recruits EP300 to chromatin. Interacts with RORA; the interaction disrupts interaction with EP300. Interacts (not methylated) with MED23, MED26, SMARCA2, SMARCB1 and SMARCC1. Interacts with KAT2A and KAT2B. Interacts with ATF5; EP300 is required for ATF5 and CEBPB interaction and DNA binding. Interacts with NFE2L1; the heterodimer represses expression of DSPP during odontoblast differentiation. Methylated. Methylation at Arg-3 by CARM1 and at Lys-43 by EHMT2 inhibit transactivation activity. Methylation is probably inhibited by phosphorylation at Thr-236. In terms of processing, sumoylated by polymeric chains of SUMO2 or SUMO3. Sumoylation at Lys-174 is required for inhibition of T-cells proliferation. In adipocytes, sumoylation at Lys-174 by PIAS1 leads to ubiquitination and subsequent proteasomal degradation. Desumoylated by SENP2, which abolishes ubiquitination and stabilizes protein levels. Post-translationally, ubiquitinated, leading to proteasomal degradation. Phosphorylated at Thr-236 by MAPK and CDK2, serves to prime phosphorylation at Thr-227 and Ser-232 by GSK3B and acquire DNA-binding as well as transactivation activities, required to induce adipogenesis. MAPK and CDK2 act sequentially to maintain Thr-236 in the primed phosphorylated state during mitotical cloning expansion and thereby progression of terminal differentiation. Phosphorylation at Thr-269 enhances transactivation activity. Phosphorylation at Ser-328 in response to calcium increases transactivation activity. Phosphorylated at Thr-236 by RPS6KA1. In terms of processing, O-glycosylated, glycosylation at Ser-228 and Ser-229 prevents phosphorylation on Thr-236, Ser-232 and Thr-227 and DNA binding activity which delays the adipocyte differentiation program. Post-translationally, acetylated. Acetylation at Lys-43 is an important and dynamic regulatory event that contributes to its ability to transactivate target genes, including those associated with adipogenesis and adipocyte function. Deacetylation by HDAC1 represses its transactivation activity. Acetylated by KAT2A and KAT2B within a cluster of lysine residues between amino acids 129-133, this acetylation is strongly induced by glucocorticoid treatment and enhances transactivation activity.

Its subcellular location is the nucleus. It localises to the cytoplasm. Its function is as follows. Important transcription factor regulating the expression of genes involved in immune and inflammatory responses. Also plays a significant role in adipogenesis, as well as in the gluconeogenic pathway, liver regeneration, and hematopoiesis. The consensus recognition site is 5'-T[TG]NNGNAA[TG]-3'. Its functional capacity is governed by protein interactions and post-translational protein modifications. During early embryogenesis, plays essential and redundant roles with CEBPA. Has a promitotic effect on many cell types such as hepatocytes and adipocytes but has an antiproliferative effect on T-cells by repressing MYC expression, facilitating differentiation along the T-helper 2 lineage. Binds to regulatory regions of several acute-phase and cytokines genes and plays a role in the regulation of acute-phase reaction and inflammation. Also plays a role in intracellular bacteria killing. During adipogenesis, is rapidly expressed and, after activation by phosphorylation, induces CEBPA and PPARG, which turn on the series of adipocyte genes that give rise to the adipocyte phenotype. The delayed transactivation of the CEBPA and PPARG genes by CEBPB appears necessary to allow mitotic clonal expansion and thereby progression of terminal differentiation. Essential for female reproduction because of a critical role in ovarian follicle development. Restricts osteoclastogenesis: together with NFE2L1; represses expression of DSPP during odontoblast differentiation. This Bos taurus (Bovine) protein is CCAAT/enhancer-binding protein beta (CEBPB).